A 295-amino-acid chain; its full sequence is Glycine--tRNA ligase alpha subunit (295 aa).

It belongs to the class-II aminoacyl-tRNA synthetase family. In terms of assembly, tetramer of two alpha and two beta subunits.

It is found in the cytoplasm. The enzyme catalyses tRNA(Gly) + glycine + ATP = glycyl-tRNA(Gly) + AMP + diphosphate. In Desulforamulus reducens (strain ATCC BAA-1160 / DSM 100696 / MI-1) (Desulfotomaculum reducens), this protein is Glycine--tRNA ligase alpha subunit.